A 62-amino-acid polypeptide reads, in one-letter code: Large ribosomal subunit protein uL30 (62 aa).

Belongs to the universal ribosomal protein uL30 family. As to quaternary structure, part of the 50S ribosomal subunit.

The chain is Large ribosomal subunit protein uL30 from Hydrogenovibrio crunogenus (strain DSM 25203 / XCL-2) (Thiomicrospira crunogena).